The chain runs to 398 residues: Nocardicin C N-oxygenase (398 aa).

The tract at residues 63 to 90 (RARAAGREETPRVTPEAAPAGSMLSMDP) is disordered. Positions 93, 97, 289, 345, and 347 each coordinate heme.

This sequence belongs to the cytochrome P450 family. It depends on heme as a cofactor.

It catalyses the reaction nocardicin C + 4 reduced [2Fe-2S]-[ferredoxin] + 2 O2 + 2 H(+) = nocardicin A + 4 oxidized [2Fe-2S]-[ferredoxin] + 3 H2O. The protein operates within antibiotic biosynthesis. Involved in the biosynthesis of the beta-lactam antibiotic nocardicin A. Catalyzes the conversion of nocardicin C to nocardicin A. Cannot use nocardicin G. In Nocardia uniformis subsp. tsuyamanensis, this protein is Nocardicin C N-oxygenase.